Here is a 510-residue protein sequence, read N- to C-terminus: NAD(P)H-quinone oxidoreductase subunit 2 B, chloroplastic (510 aa).

The next 13 helical transmembrane spans lie at 24–44 (LLLF…GLIL), 57–77 (LPWF…ALLF), 99–119 (IFQF…VEYI), 124–144 (MAIT…MFLC), 149–169 (LITI…LSGY), 183–203 (YLLM…WLYG), 227–247 (PGIS…LSPA), 295–315 (WHLL…IIAI), 323–343 (MLAY…IVGD), 354–374 (YMLF…LFGL), 395–415 (ALSL…AGFF), 428–448 (GLYS…YYYL), and 484–504 (MIVC…IIAI).

It belongs to the complex I subunit 2 family. As to quaternary structure, NDH is composed of at least 16 different subunits, 5 of which are encoded in the nucleus.

The protein resides in the plastid. The protein localises to the chloroplast thylakoid membrane. The catalysed reaction is a plastoquinone + NADH + (n+1) H(+)(in) = a plastoquinol + NAD(+) + n H(+)(out). The enzyme catalyses a plastoquinone + NADPH + (n+1) H(+)(in) = a plastoquinol + NADP(+) + n H(+)(out). Functionally, NDH shuttles electrons from NAD(P)H:plastoquinone, via FMN and iron-sulfur (Fe-S) centers, to quinones in the photosynthetic chain and possibly in a chloroplast respiratory chain. The immediate electron acceptor for the enzyme in this species is believed to be plastoquinone. Couples the redox reaction to proton translocation, and thus conserves the redox energy in a proton gradient. This is NAD(P)H-quinone oxidoreductase subunit 2 B, chloroplastic from Jasminum nudiflorum (Winter jasmine).